A 377-amino-acid chain; its full sequence is MEALLLGAGLLLGAYVLVYYNLVKAPPCGGMGNLRGRTAVVTGANSGIGKMTALELARRGARVVLACRSQERGEAAAFDLRQESGNNEVIFMALDLASLASVRAFATAFLSSEPRLDILIHNAGISSCGRTREAFNLLLRVNHIGPFLLTHLLLPCLKACAPSRVVVVASAAHCRGRLDFKRLDRPVVGWRQELRAYADTKLANVLFARELANQLEATGVTCYAAHPGPVNSELFLRHVPGWLRPLLRPLAWLVLRAPRGGAQTPLYCALQEGIEPLSGRYFANCHVEEVPPAARDDRAAHRLWEASKRLAGLGPGEDAEPDEDPQSEDSEAPSSLSTPHPEEPTVSQPYPSPQSSPDLSKMTHRIQAKVEPEIQLS.

The N-terminal stretch at 1-25 is a signal peptide; that stretch reads MEALLLGAGLLLGAYVLVYYNLVKA. Residues Ser-46 and Ile-48 each coordinate NAD(+). Ser-170 is a substrate binding site. NAD(+) is bound by residues Tyr-197, Lys-201, and Ser-232. Catalysis depends on Tyr-197, which acts as the Proton acceptor. Residues 309-377 are disordered; it reads RLAGLGPGED…AKVEPEIQLS (69 aa). Residues 317 to 331 show a composition bias toward acidic residues; sequence EDAEPDEDPQSEDSE. A compositionally biased stretch (low complexity) spans 347 to 357; the sequence is SQPYPSPQSSP. A compositionally biased stretch (basic and acidic residues) spans 368-377; that stretch reads AKVEPEIQLS.

The protein belongs to the short-chain dehydrogenases/reductases (SDR) family.

It localises to the secreted. Its function is as follows. Putative oxidoreductase. The sequence is that of Dehydrogenase/reductase SDR family member 13 from Homo sapiens (Human).